Reading from the N-terminus, the 126-residue chain is Aspartate 1-decarboxylase (126 aa).

The active-site Schiff-base intermediate with substrate; via pyruvic acid is Ser-25. Residue Ser-25 is modified to Pyruvic acid (Ser). A substrate-binding site is contributed by Thr-57. Tyr-58 acts as the Proton donor in catalysis. 73–75 (GSA) contacts substrate.

This sequence belongs to the PanD family. Heterooctamer of four alpha and four beta subunits. Requires pyruvate as cofactor. Post-translationally, is synthesized initially as an inactive proenzyme, which is activated by self-cleavage at a specific serine bond to produce a beta-subunit with a hydroxyl group at its C-terminus and an alpha-subunit with a pyruvoyl group at its N-terminus.

Its subcellular location is the cytoplasm. It catalyses the reaction L-aspartate + H(+) = beta-alanine + CO2. It participates in cofactor biosynthesis; (R)-pantothenate biosynthesis; beta-alanine from L-aspartate: step 1/1. Functionally, catalyzes the pyruvoyl-dependent decarboxylation of aspartate to produce beta-alanine. The polypeptide is Aspartate 1-decarboxylase (Acidovorax ebreus (strain TPSY) (Diaphorobacter sp. (strain TPSY))).